Reading from the N-terminus, the 207-residue chain is Small ribosomal subunit protein uS4c (207 aa).

In terms of domain architecture, S4 RNA-binding spans 92 to 155; that stretch reads MRLDNILFRL…TYQSILSKRI (64 aa).

This sequence belongs to the universal ribosomal protein uS4 family. Part of the 30S ribosomal subunit. Contacts protein S5. The interaction surface between S4 and S5 is involved in control of translational fidelity.

It is found in the plastid. Its subcellular location is the chloroplast. Functionally, one of the primary rRNA binding proteins, it binds directly to 16S rRNA where it nucleates assembly of the body of the 30S subunit. In terms of biological role, with S5 and S12 plays an important role in translational accuracy. This chain is Small ribosomal subunit protein uS4c (rps4), found in Equisetum scirpoides (Dwarf-scouring rush).